A 793-amino-acid polypeptide reads, in one-letter code: Calcium permeable stress-gated cation channel 1 (793 aa).

Residues 1-21 are Lumenal-facing; it reads MAFNGYGIFDSDPRKNPSSDL. The helical transmembrane segment at 22-42 threads the bilayer; that stretch reads RTQFWLAFLLGASACVFFCFF. The Cytoplasmic segment spans residues 43 to 95; that stretch reads RKRWKVLYAPRTTIEGLNLPTLSSSYYKWLMDLVNIPDDVVQNCAGLDGYVFL. A helical transmembrane segment spans residues 96-116; it reads LFFKMGIKFLSFASLLGVLII. Residues 117-192 are Lumenal-facing; that stretch reads MPVNKHFRGD…IPGLPQPGDG (76 aa). Residues 193 to 213 form a helical membrane-spanning segment; it reads FLYLYVLFTYFISIFLLYVLF. At 214–444 the chain is on the cytoplasmic side; that stretch reads SSTKSIADIR…HKFFQGWFIT (231 aa). The chain crosses the membrane as a helical span at residues 445–465; the sequence is LVTFMIILLWTVPVGAIAVFI. The Lumenal segment spans residues 466 to 493; it reads NLDTIRRLWPELGRMIEDLPFLNSLLRT. Residues 494–514 traverse the membrane as a helical segment; it reads FLPTLVYSLFISISPFLFRWL. The Cytoplasmic portion of the chain corresponds to 515-534; it reads SSMQGLSSRAEEEIYAVGKN. A helical membrane pass occupies residues 535-555; it reads YAYLFVNFFLVYVIAGSTSIW. Residues 556–577 are Lumenal-facing; it reads ELAKDTTSFAHFLANRLPHQAQ. The helical transmembrane segment at 578-598 threads the bilayer; it reads FFIDLIVLQGIGMFPLKLIQL. Residues 599 to 646 lie on the Cytoplasmic side of the membrane; sequence GKLSSYFVRRSFVPYSIASKKFETPDSFSVGIFLPQPMFIMLICLCYS. Residues 647-667 form a helical membrane-spanning segment; that stretch reads IISPLILVFGLIYFIIGFLVY. Over 668–687 the chain is Lumenal; it reads KYELIYQMEHPQHSTGELWS. Residues 688-708 traverse the membrane as a helical segment; it reads TIFLRMIFGCVIMQLTMMGLM. At 709-713 the chain is on the cytoplasmic side; the sequence is SLRKA. The helical transmembrane segment at 714-734 threads the bilayer; sequence YWLSTVIFPLLCFTVISAYNF. Over 735–793 the chain is Lumenal; it reads STMIRSSMQFVSLYYIRTHQSNTLSSESESRNSESSGSYVHPGFDLSNEELPLIDLNTA. The segment at 759–778 is disordered; the sequence is SSESESRNSESSGSYVHPGF.

This sequence belongs to the CSC1 (TC 1.A.17) family.

It is found in the vacuole membrane. In terms of biological role, acts as an osmosensitive calcium-permeable cation channel. This is Calcium permeable stress-gated cation channel 1 from Schizosaccharomyces pombe (strain 972 / ATCC 24843) (Fission yeast).